The sequence spans 463 residues: uncharacterized protein (463 aa).

The protein belongs to the UbiD family.

This is an uncharacterized protein from Rhodospirillum rubrum.